Consider the following 309-residue polypeptide: Probable manganese-dependent inorganic pyrophosphatase (309 aa).

The Mn(2+) site is built by H9, D13, D15, D75, H97, and D149.

Belongs to the PPase class C family. It depends on Mn(2+) as a cofactor.

The protein resides in the cytoplasm. The catalysed reaction is diphosphate + H2O = 2 phosphate + H(+). This Staphylococcus epidermidis (strain ATCC 35984 / DSM 28319 / BCRC 17069 / CCUG 31568 / BM 3577 / RP62A) protein is Probable manganese-dependent inorganic pyrophosphatase.